A 230-amino-acid chain; its full sequence is Probable dual specificity protein phosphatase DDB_G0283417 (230 aa).

Residues 78–230 (NNNYESINLY…LEIFEKELLF (153 aa)) form the Tyrosine-protein phosphatase domain. Cys-174 (phosphocysteine intermediate) is an active-site residue.

Belongs to the protein-tyrosine phosphatase family. Non-receptor class dual specificity subfamily.

The enzyme catalyses O-phospho-L-tyrosyl-[protein] + H2O = L-tyrosyl-[protein] + phosphate. It catalyses the reaction O-phospho-L-seryl-[protein] + H2O = L-seryl-[protein] + phosphate. It carries out the reaction O-phospho-L-threonyl-[protein] + H2O = L-threonyl-[protein] + phosphate. Its function is as follows. Has a dual specificity toward Ser/Thr and Tyr-containing proteins. The chain is Probable dual specificity protein phosphatase DDB_G0283417 from Dictyostelium discoideum (Social amoeba).